The chain runs to 455 residues: T-box protein VegT-B (455 aa).

Positions 57–230 (LWTQFHQEGT…HNPFAKGFRE (174 aa)) form a DNA-binding region, T-box. Over residues 229–241 (REQERSHKRDDVL) the composition is skewed to basic and acidic residues. Disordered regions lie at residues 229-276 (REQE…RIKE) and 295-350 (ANQG…RRLT). A compositionally biased stretch (polar residues) spans 308–326 (GVNQEQQVPTSSSNFYIKS).

In terms of assembly, forms a repression complex on the promoters of the nodal/nr1 and siamois genes with the maternal factors tcf7l1/tcf3 and pouf5.1/oct-25. Interacts (via C-terminus) with tcf7l1/tcf3 (via N-terminus). Also interacts with the other POU-domain transcription factors pou5f1.2/oct-91 and pou5f1.3/oct-60. Maternally localized to the vegetal hemisphere of oocytes. Zygotic expression parallels blastopore formation and shifts from dorsal expression in the marginal zone of late blastula and early gastrula stages to a ventral/lateral expression at later stages. During neurula and tailbud stages, expressed in the posterior and anterior ends of the embryo. During tailbud stages, expressed in a subset of interneurons in the neural tube.

It is found in the nucleus. Its function is as follows. Transcription factor required for both mesoderm and endoderm formation in the embryo; signaling determinants and concentration levels may determine which germ layer is formed. Acts together with beta-catenin to activate genes that are responsible for mesoderm induction including wnt-8, eomes t/bra, siamois, mix1 and sox17. Directly binds to promoter DNA. Patterns the mesoderm along the dorsoventral and posterior axis. Activates siamois gene transcription when alone or in combination with beta-catenin, but inhibits siamois transcription in combination with pou5f1.1/oct-25. The protein is T-box protein VegT-B (vegt-b) of Xenopus laevis (African clawed frog).